The following is a 521-amino-acid chain: Na(+)/H(+) antiporter ApNhaP (521 aa).

Residues 1-18 lie on the Periplasmic side of the membrane; the sequence is MTIEAAMGEEAIKENLEQ. A helical transmembrane segment spans residues 19 to 39; it reads FLIVLSVSLGVATLSQISSFF. Topologically, residues 40 to 41 are cytoplasmic; it reads RQ. Residues 42-62 traverse the membrane as a helical segment; that stretch reads IPYTLLLVIVGLGLAFVDIRL. Topologically, residues 63 to 94 are periplasmic; it reads VNLSPELILEIFLPPLLFEAAWNIRWRNLKKN. Residues 95–115 form a helical membrane-spanning segment; the sequence is LFPVVLLAIIGVVISVVGIGF. The Cytoplasmic segment spans residues 116–126; the sequence is SLNYFSGLSLP. The chain crosses the membrane as a helical span at residues 127–147; the sequence is IALLVGAILAATDPVSVIALF. Over 148–164 the chain is Periplasmic; the sequence is RELGVGERLTVLMEGES. The chain crosses the membrane as a helical span at residues 165-185; it reads LFNDGVAVVAFSLLVGIPLGT. The Cytoplasmic segment spans residues 186–194; sequence QEFSVTNTL. Residues 195-215 traverse the membrane as a helical segment; the sequence is IQFVTLQGIGIGCGGVIGFGI. At 216 to 245 the chain is on the periplasmic side; it reads SYLTQRFDLPLVEQSLTLVSAYGTYLITEE. A helical transmembrane segment spans residues 246–266; sequence LGGSGVIGVVTVGLILGNFGS. Residues 267 to 276 are Cytoplasmic-facing; it reads RIGMNPRTRL. The helical transmembrane segment at 277–297 threads the bilayer; the sequence is LVSEFWEFIAFFVNSIVFLLI. Topologically, residues 298 to 311 are periplasmic; the sequence is GDQINIRGLADNGQ. The helical transmembrane segment at 312–332 threads the bilayer; the sequence is LILITIIALVIIRAISIYGLG. The Cytoplasmic portion of the chain corresponds to 333–349; that stretch reads TISNLITKQDISWQEET. The helical transmembrane segment at 350–370 threads the bilayer; sequence VLWWGGLRGSVSIALALSVPV. The Periplasmic segment spans residues 371-380; sequence MLDGRQDIIE. The chain crosses the membrane as a helical span at residues 381–401; it reads AVFGVVLFTLLVQGLTMQTVI. Residues 402-521 are Cytoplasmic-facing; the sequence is EKLGLIGDRA…LLQEVLAKPE (120 aa).

It belongs to the monovalent cation:proton antiporter 1 (CPA1) transporter (TC 2.A.36) family.

The protein localises to the cell inner membrane. In terms of biological role, na(+)/H(+) antiporter that extrudes sodium in exchange for external protons. Also shows high Ca(2+)/H(+) antiporter activity at alkaline pH. Does not catalyze exchange between Li(+) and H(+). This Aphanothece halophytica protein is Na(+)/H(+) antiporter ApNhaP (apnhaP).